A 373-amino-acid polypeptide reads, in one-letter code: Leucine aminopeptidase 1 (373 aa).

The signal sequence occupies residues 1 to 18; the sequence is MKFISVLALGATATSVLG. Zn(2+) contacts are provided by His176 and Asp195. Asn196 carries N-linked (GlcNAc...) asparagine glycosylation. Zn(2+) contacts are provided by Glu234 and Asp261. Residue Asn286 is glycosylated (N-linked (GlcNAc...) asparagine). Cys310 and Cys314 are joined by a disulfide. Zn(2+) is bound at residue His343.

Belongs to the peptidase M28 family. M28E subfamily. In terms of assembly, monomer. The cofactor is Zn(2+).

The protein localises to the secreted. Extracellular aminopeptidase which contributes to pathogenicity. This is Leucine aminopeptidase 1 (LAP1) from Arthroderma otae (strain ATCC MYA-4605 / CBS 113480) (Microsporum canis).